Consider the following 299-residue polypeptide: Acetylglutamate kinase (299 aa).

Substrate is bound by residues 72–73, Arg-94, and Asn-196; that span reads GG.

It belongs to the acetylglutamate kinase family. ArgB subfamily.

It is found in the cytoplasm. It carries out the reaction N-acetyl-L-glutamate + ATP = N-acetyl-L-glutamyl 5-phosphate + ADP. Its pathway is amino-acid biosynthesis; L-arginine biosynthesis; N(2)-acetyl-L-ornithine from L-glutamate: step 2/4. Its function is as follows. Catalyzes the ATP-dependent phosphorylation of N-acetyl-L-glutamate. This Burkholderia cenocepacia (strain ATCC BAA-245 / DSM 16553 / LMG 16656 / NCTC 13227 / J2315 / CF5610) (Burkholderia cepacia (strain J2315)) protein is Acetylglutamate kinase.